Consider the following 528-residue polypeptide: Probable GTP-binding protein OBGM, mitochondrial (528 aa).

Residues Met-1–Gly-45 constitute a mitochondrion transit peptide. The region spanning Met-46–Ile-339 is the Obg domain. 2 disordered regions span residues Leu-52–Asp-87 and His-167–Gly-212. Residues Pro-77–Gly-86 show a composition bias toward gly residues. Over residues Asn-197 to Asn-207 the composition is skewed to basic and acidic residues. The 174-residue stretch at Ala-340–Asp-513 folds into the OBG-type G domain. GTP contacts are provided by residues Gly-346–Ser-353 and Asp-393–Leu-397.

Belongs to the TRAFAC class OBG-HflX-like GTPase superfamily. OBG GTPase family.

Its subcellular location is the mitochondrion. Its function is as follows. May bind GTP and have GTPase activity. The sequence is that of Probable GTP-binding protein OBGM, mitochondrial (OBGM) from Oryza sativa subsp. japonica (Rice).